The primary structure comprises 193 residues: MSALRLIVGLGNPGPEHAQTRHNAGFRFVDALAERTGARWGLDSKLFGETAKADIAGHTVWLLKPATFMNLSGKSITAALRFWKIEPEQLLVAHDELDLAPGTARLKFDGGHGGQNGLRDTIRLLGHGKFHRLRVGIGHPGHKDRVVPWVLGRAGRDDDMAIGEAVDAAIDALPLALDGNFNEAMKRLHTPKK.

His17 is a tRNA binding site. His22 serves as the catalytic Proton acceptor. TRNA contacts are provided by Phe68, Asn70, and Asn116.

The protein belongs to the PTH family. Monomer.

The protein localises to the cytoplasm. The catalysed reaction is an N-acyl-L-alpha-aminoacyl-tRNA + H2O = an N-acyl-L-amino acid + a tRNA + H(+). Functionally, hydrolyzes ribosome-free peptidyl-tRNAs (with 1 or more amino acids incorporated), which drop off the ribosome during protein synthesis, or as a result of ribosome stalling. In terms of biological role, catalyzes the release of premature peptidyl moieties from peptidyl-tRNA molecules trapped in stalled 50S ribosomal subunits, and thus maintains levels of free tRNAs and 50S ribosomes. This is Peptidyl-tRNA hydrolase from Xanthomonas campestris pv. campestris (strain 8004).